Reading from the N-terminus, the 488-residue chain is Acetyl-coenzyme A carboxylase carboxyl transferase subunit beta, chloroplastic (488 aa).

Residues 227–488 enclose the CoA carboxyltransferase N-terminal domain; the sequence is LWIQCDNCYG…LHAFFPLNTN (262 aa). Cys-231, Cys-234, Cys-247, and Cys-250 together coordinate Zn(2+). The C4-type zinc finger occupies 231–250; sequence CDNCYGLMYKKVKMNVCEQC.

It belongs to the AccD/PCCB family. Acetyl-CoA carboxylase is a heterohexamer composed of biotin carboxyl carrier protein, biotin carboxylase and 2 subunits each of ACCase subunit alpha and ACCase plastid-coded subunit beta (accD). The cofactor is Zn(2+). Accumulates in fatty acids synthesizing tissues such as embryos, expanding leaves, flower buds, flowers, and developing siliques.

It is found in the plastid. It localises to the chloroplast membrane. The protein resides in the chloroplast stroma. The catalysed reaction is N(6)-carboxybiotinyl-L-lysyl-[protein] + acetyl-CoA = N(6)-biotinyl-L-lysyl-[protein] + malonyl-CoA. Its pathway is lipid metabolism; malonyl-CoA biosynthesis; malonyl-CoA from acetyl-CoA: step 1/1. Functionally, component of the acetyl coenzyme A carboxylase (ACC) complex. Biotin carboxylase (BC) catalyzes the carboxylation of biotin on its carrier protein (BCCP) and then the CO(2) group is transferred by the transcarboxylase to acetyl-CoA to form malonyl-CoA. The protein is Acetyl-coenzyme A carboxylase carboxyl transferase subunit beta, chloroplastic of Arabidopsis thaliana (Mouse-ear cress).